The following is a 271-amino-acid chain: Potential ATP-binding protein (271 aa).

ATP is bound at residue 34–41 (GQPGVGKT).

The protein is Potential ATP-binding protein of Staphylococcus aureus.